We begin with the raw amino-acid sequence, 104 residues long: U-scoloptoxin(10)-Cw1a (104 aa).

The first 23 residues, 1–23, serve as a signal peptide directing secretion; it reads MNKTVAVFFAVICVICVIKSCKT.

The protein belongs to the scoloptoxin-10 family. Post-translationally, contains 3 disulfide bonds. In terms of tissue distribution, expressed by the venom gland.

It localises to the secreted. The chain is U-scoloptoxin(10)-Cw1a from Cormocephalus westwoodi (Westwood's green centipede).